A 144-amino-acid polypeptide reads, in one-letter code: Ferredoxin-thioredoxin reductase catalytic chain, chloroplastic (144 aa).

The N-terminal 31 residues, 1-31 (MKALQASIAYSFPISSPAASPRRFSRVIRAQ), are a transit peptide targeting the chloroplast. Cys-83 lines the [4Fe-4S] cluster pocket. Catalysis depends on Cys-85, which acts as the Nucleophile. Cys-85 and Cys-115 are oxidised to a cystine. [4Fe-4S] cluster is bound by residues Cys-102, Cys-104, and Cys-113.

It belongs to the ferredoxin thioredoxin reductase beta subunit family. As to quaternary structure, heterodimer of subunit A (variable subunit) and subunit B (catalytic subunit). Heterodimeric FTR forms a complex with ferredoxin and thioredoxin. The cofactor is [4Fe-4S] cluster.

The protein resides in the plastid. It localises to the chloroplast. It carries out the reaction [thioredoxin]-disulfide + 2 reduced [2Fe-2S]-[ferredoxin] + 2 H(+) = [thioredoxin]-dithiol + 2 oxidized [2Fe-2S]-[ferredoxin]. In terms of biological role, catalytic subunit of the ferredoxin-thioredoxin reductase (FTR), which catalyzes the two-electron reduction of thioredoxins by the electrons provided by reduced ferredoxin. This Spinacia oleracea (Spinach) protein is Ferredoxin-thioredoxin reductase catalytic chain, chloroplastic (FTRC).